The chain runs to 148 residues: uncharacterized protein (148 aa).

This is an uncharacterized protein from Bos taurus (Bovine).